Reading from the N-terminus, the 269-residue chain is Fructose-2,6-bisphosphatase TIGAR (269 aa).

The Tele-phosphohistidine intermediate role is filled by histidine 11. The active-site Proton donor/acceptor is glutamate 89.

The protein belongs to the phosphoglycerate mutase family. Interacts with HK2; the interaction increases hexokinase HK2 activity in a hypoxia- and HIF1A-dependent manner, resulting in the regulation of mitochondrial membrane potential, thus increasing NADPH production and decreasing intracellular ROS levels. As to expression, expressed in olfactory bulb, cerebellum, and cortex. Expressed in neurons and astrocytes (at protein level). Expressed in intestinal crypt.

The protein resides in the cytoplasm. Its subcellular location is the nucleus. It localises to the mitochondrion. It catalyses the reaction beta-D-fructose 2,6-bisphosphate + H2O = beta-D-fructose 6-phosphate + phosphate. Functionally, fructose-bisphosphatase hydrolyzing fructose-2,6-bisphosphate as well as fructose-1,6-bisphosphate. Acts as a negative regulator of glycolysis by lowering intracellular levels of fructose-2,6-bisphosphate in a p53/TP53-dependent manner, resulting in the pentose phosphate pathway (PPP) activation and NADPH production. Contributes to the generation of reduced glutathione to cause a decrease in intracellular reactive oxygen species (ROS) content, correlating with its ability to protect cells from oxidative or metabolic stress-induced cell death. Plays a role in promoting protection against cell death during hypoxia by decreasing mitochondria ROS levels in a HK2-dependent manner through a mechanism that is independent of its fructose-bisphosphatase activity. In response to cardiac damage stress, mediates p53-induced inhibition of myocyte mitophagy through ROS levels reduction and the subsequent inactivation of BNIP3. Reduced mitophagy results in an enhanced apoptotic myocyte cell death, and exacerbates cardiac damage. Plays a role in adult intestinal regeneration; contributes to the growth, proliferation and survival of intestinal crypts following tissue ablation. Plays a neuroprotective role against ischemic brain damage by enhancing PPP flux and preserving mitochondria functions. Protects glioma cells from hypoxia- and ROS-induced cell death by inhibiting glycolysis and activating mitochondrial energy metabolism and oxygen consumption in a TKTL1-dependent and p53/TP53-independent manner. Plays a role in cancer cell survival by promoting DNA repair through activating PPP flux in a CDK5-ATM-dependent signaling pathway during hypoxia and/or genome stress-induced DNA damage responses. Involved in intestinal tumor progression. The sequence is that of Fructose-2,6-bisphosphatase TIGAR from Mus musculus (Mouse).